Reading from the N-terminus, the 133-residue chain is Large ribosomal subunit protein bL20 (133 aa).

This sequence belongs to the bacterial ribosomal protein bL20 family.

Its function is as follows. Binds directly to 23S ribosomal RNA and is necessary for the in vitro assembly process of the 50S ribosomal subunit. It is not involved in the protein synthesizing functions of that subunit. The polypeptide is Large ribosomal subunit protein bL20 (Bartonella bacilliformis (strain ATCC 35685 / KC583 / Herrer 020/F12,63)).